The following is a 696-amino-acid chain: Elongation factor G (696 aa).

One can recognise a tr-type G domain in the interval Glu8–Ala288. Residues Ala17–Thr24, Asp86–His90, and Asn140–Asp143 contribute to the GTP site.

It belongs to the TRAFAC class translation factor GTPase superfamily. Classic translation factor GTPase family. EF-G/EF-2 subfamily.

It is found in the cytoplasm. Its function is as follows. Catalyzes the GTP-dependent ribosomal translocation step during translation elongation. During this step, the ribosome changes from the pre-translocational (PRE) to the post-translocational (POST) state as the newly formed A-site-bound peptidyl-tRNA and P-site-bound deacylated tRNA move to the P and E sites, respectively. Catalyzes the coordinated movement of the two tRNA molecules, the mRNA and conformational changes in the ribosome. The polypeptide is Elongation factor G (Mesorhizobium japonicum (strain LMG 29417 / CECT 9101 / MAFF 303099) (Mesorhizobium loti (strain MAFF 303099))).